The chain runs to 456 residues: PTS system sucrose-specific EIIBC component (456 aa).

The PTS EIIB type-1 domain maps to 4–87 (EQISRSLLPL…IQAAGISESS (84 aa)). C26 serves as the catalytic Phosphocysteine intermediate; for EIIB activity. A PTS EIIC type-1 domain is found at 107–456 (RLLSNIFVPI…LTLKYKTDAE (350 aa)). 10 consecutive transmembrane segments (helical) span residues 112–132 (IFVP…LLGM), 144–164 (ALYI…PILI), 181–201 (TLGG…AAGF), 209–229 (IEVA…AVWF), 247–267 (LILT…LLIG), 288–308 (AGWL…ITGI), 329–349 (FLLP…FAVW), 360–380 (ITLP…IFGI), 388–408 (FIAA…MHVY), and 428–448 (LLNY…LSLT).

The protein localises to the cell inner membrane. The enzyme catalyses N(pros)-phospho-L-histidyl-[protein](out) + sucrose = sucrose 6(G)-phosphate(in) + L-histidyl-[protein]. In terms of biological role, the phosphoenolpyruvate-dependent sugar phosphotransferase system (sugar PTS), a major carbohydrate active transport system, catalyzes the phosphorylation of incoming sugar substrates concomitantly with their translocation across the cell membrane. This system is involved in sucrose transport. The protein is PTS system sucrose-specific EIIBC component of Klebsiella pneumoniae.